Here is a 157-residue protein sequence, read N- to C-terminus: MSKHKVSPATIAKNKKALHDYTILEKFEAGIVLQGWEVKSIRAGKVQMVDSHVHIKHGEAWLFNCLITPLLSASTHVVADAAATRKLLLNRREINKIMGRIEQKGFTCVPLAMYWKGPRVKVEIALAQGKKVHDKRQAQKDKDWAREKDRLFKKAYK.

Residues 132-157 are disordered; it reads VHDKRQAQKDKDWAREKDRLFKKAYK. Over residues 135–157 the composition is skewed to basic and acidic residues; that stretch reads KRQAQKDKDWAREKDRLFKKAYK.

The protein belongs to the SmpB family.

The protein localises to the cytoplasm. In terms of biological role, required for rescue of stalled ribosomes mediated by trans-translation. Binds to transfer-messenger RNA (tmRNA), required for stable association of tmRNA with ribosomes. tmRNA and SmpB together mimic tRNA shape, replacing the anticodon stem-loop with SmpB. tmRNA is encoded by the ssrA gene; the 2 termini fold to resemble tRNA(Ala) and it encodes a 'tag peptide', a short internal open reading frame. During trans-translation Ala-aminoacylated tmRNA acts like a tRNA, entering the A-site of stalled ribosomes, displacing the stalled mRNA. The ribosome then switches to translate the ORF on the tmRNA; the nascent peptide is terminated with the 'tag peptide' encoded by the tmRNA and targeted for degradation. The ribosome is freed to recommence translation, which seems to be the essential function of trans-translation. The sequence is that of SsrA-binding protein from Francisella tularensis subsp. novicida (strain U112).